We begin with the raw amino-acid sequence, 882 residues long: Liprin-beta-2 (882 aa).

A coiled-coil region spans residues 101 to 303 (AASNETYQER…DKDRRIEELT (203 aa)). A phosphoserine mark is found at Ser-328, Ser-362, and Ser-386. The segment at 339–554 (RKWNTTNKSP…SRTRDTKGQK (216 aa)) is disordered. Basic and acidic residues predominate over residues 388–399 (EDLRRESGDKCV). Polar residues-rich tracts occupy residues 442–457 (PTASLQPDSSGSSQPK) and 481–495 (SSASSGTESSPQSPV). Phosphoserine occurs at positions 502 and 518. Over residues 502-515 (SPKGIKKFWGKIRR) the composition is skewed to basic residues. SAM domains are found at residues 564–628 (WSTE…INAK), 636–699 (LDHI…LHVN), and 724–789 (WSNH…KFNA).

The protein belongs to the liprin family. Liprin-beta subfamily. Forms homodimers and heterodimers. Expressed widely. Strong expression in liver, kidney, intestine, heart, lung and testis. Low expression in brain and thymus.

Functionally, may regulate the disassembly of focal adhesions. Did not bind receptor-like tyrosine phosphatases type 2A. This Mus musculus (Mouse) protein is Liprin-beta-2 (Ppfibp2).